A 357-amino-acid polypeptide reads, in one-letter code: UPF0744 protein C106.03 (357 aa).

Ser282 is modified (phosphoserine).

Belongs to the UPF0744 family.

It localises to the cytoplasm. The polypeptide is UPF0744 protein C106.03 (Schizosaccharomyces pombe (strain 972 / ATCC 24843) (Fission yeast)).